A 479-amino-acid chain; its full sequence is ATP-dependent protease ATPase subunit HslU (479 aa).

Residues Ile-32, 74–79, Asp-290, Glu-355, and Arg-427 contribute to the ATP site; that span reads GVGKTE.

It belongs to the ClpX chaperone family. HslU subfamily. As to quaternary structure, a double ring-shaped homohexamer of HslV is capped on each side by a ring-shaped HslU homohexamer. The assembly of the HslU/HslV complex is dependent on binding of ATP.

It localises to the cytoplasm. Functionally, ATPase subunit of a proteasome-like degradation complex; this subunit has chaperone activity. The binding of ATP and its subsequent hydrolysis by HslU are essential for unfolding of protein substrates subsequently hydrolyzed by HslV. HslU recognizes the N-terminal part of its protein substrates and unfolds these before they are guided to HslV for hydrolysis. The sequence is that of ATP-dependent protease ATPase subunit HslU from Leptospira interrogans serogroup Icterohaemorrhagiae serovar Lai (strain 56601).